Reading from the N-terminus, the 339-residue chain is UDP-N-acetylglucosamine--N-acetylmuramyl-(pentapeptide) pyrophosphoryl-undecaprenol N-acetylglucosamine transferase (339 aa).

UDP-N-acetyl-alpha-D-glucosamine contacts are provided by residues 10–12, N124, R168, S188, I235, and Q280; that span reads TGG.

The protein belongs to the glycosyltransferase 28 family. MurG subfamily.

The protein localises to the cell inner membrane. It catalyses the reaction di-trans,octa-cis-undecaprenyl diphospho-N-acetyl-alpha-D-muramoyl-L-alanyl-D-glutamyl-meso-2,6-diaminopimeloyl-D-alanyl-D-alanine + UDP-N-acetyl-alpha-D-glucosamine = di-trans,octa-cis-undecaprenyl diphospho-[N-acetyl-alpha-D-glucosaminyl-(1-&gt;4)]-N-acetyl-alpha-D-muramoyl-L-alanyl-D-glutamyl-meso-2,6-diaminopimeloyl-D-alanyl-D-alanine + UDP + H(+). It functions in the pathway cell wall biogenesis; peptidoglycan biosynthesis. Cell wall formation. Catalyzes the transfer of a GlcNAc subunit on undecaprenyl-pyrophosphoryl-MurNAc-pentapeptide (lipid intermediate I) to form undecaprenyl-pyrophosphoryl-MurNAc-(pentapeptide)GlcNAc (lipid intermediate II). This chain is UDP-N-acetylglucosamine--N-acetylmuramyl-(pentapeptide) pyrophosphoryl-undecaprenol N-acetylglucosamine transferase, found in Pseudothermotoga lettingae (strain ATCC BAA-301 / DSM 14385 / NBRC 107922 / TMO) (Thermotoga lettingae).